The primary structure comprises 353 residues: 3'-5' exonuclease (353 aa).

Positions 1-119 (MEKYLTKMPI…PSPEKEKPEK (119 aa)) are disordered. Composition is skewed to basic and acidic residues over residues 13-30 (KANE…ETPK) and 37-50 (KKDT…KENA). The span at 59–70 (TKGRPGRPAAKR) shows a compositional bias: basic residues. The span at 71-90 (KNLDTPDVTEKLAMEEENPP) shows a compositional bias: basic and acidic residues. Phosphoserine occurs at positions 103, 109, and 111. The 3'-5' exonuclease domain maps to 145 to 313 (VLQWVEKQKD…GQVIYRELER (169 aa)). Positions 162, 164, and 300 each coordinate Mg(2+).

Belongs to the WRNexo family.

It localises to the nucleus. Has exonuclease activity on both single-stranded and duplex templates bearing overhangs, but not blunt ended duplex DNA, and cleaves in a 3'-5' direction. Essential for the formation of DNA replication focal centers. Has an important role in maintaining genome stability. This Drosophila melanogaster (Fruit fly) protein is 3'-5' exonuclease.